The chain runs to 950 residues: UvrABC system protein A (950 aa).

42–49 (GLSGSGKS) contributes to the ATP binding site. A C4-type zinc finger spans residues 262-289 (CPVCSYSLPELEPRLFSFNNPMGSCPTC). ABC transporter domains lie at 319–596 (WDKR…EKSV) and 616–945 (VNPG…KYLK). 649–656 (GVSGSGKS) serves as a coordination point for ATP. The segment at 748-774 (CEACQGDGVIKVEMHFLPDVYVPCEVC) adopts a C4-type zinc-finger fold.

This sequence belongs to the ABC transporter superfamily. UvrA family. As to quaternary structure, forms a heterotetramer with UvrB during the search for lesions.

The protein localises to the cytoplasm. Functionally, the UvrABC repair system catalyzes the recognition and processing of DNA lesions. UvrA is an ATPase and a DNA-binding protein. A damage recognition complex composed of 2 UvrA and 2 UvrB subunits scans DNA for abnormalities. When the presence of a lesion has been verified by UvrB, the UvrA molecules dissociate. This is UvrABC system protein A from Neisseria gonorrhoeae.